Consider the following 521-residue polypeptide: GMP synthase [glutamine-hydrolyzing] (521 aa).

A Glutamine amidotransferase type-1 domain is found at 9 to 203 (KILILDFGSQ…ISGICQCEKN (195 aa)). Residue Cys86 is the Nucleophile of the active site. Residues His177 and Glu179 contribute to the active site. A GMPS ATP-PPase domain is found at 204-396 (WTTDNIIAKL…LSIPPHIIYR (193 aa)). 231 to 237 (SGGVDSL) lines the ATP pocket.

In terms of assembly, homodimer.

It catalyses the reaction XMP + L-glutamine + ATP + H2O = GMP + L-glutamate + AMP + diphosphate + 2 H(+). Its pathway is purine metabolism; GMP biosynthesis; GMP from XMP (L-Gln route): step 1/1. Catalyzes the synthesis of GMP from XMP. The chain is GMP synthase [glutamine-hydrolyzing] from Ruthia magnifica subsp. Calyptogena magnifica.